The sequence spans 261 residues: F-actin-capping protein subunit alpha (261 aa).

This sequence belongs to the F-actin-capping protein alpha subunit family. Heterodimer of an alpha and a beta subunit.

F-actin-capping proteins bind in a Ca(2+)-independent manner to the fast growing ends of actin filaments (barbed end) thereby blocking the exchange of subunits at these ends. Unlike other capping proteins (such as gelsolin and severin), these proteins do not sever actin filaments. The chain is F-actin-capping protein subunit alpha (CAP1) from Eremothecium gossypii (strain ATCC 10895 / CBS 109.51 / FGSC 9923 / NRRL Y-1056) (Yeast).